The following is a 352-amino-acid chain: Alanine racemase (352 aa).

The active-site Proton acceptor; specific for D-alanine is K33. K33 carries the post-translational modification N6-(pyridoxal phosphate)lysine. R129 contributes to the substrate binding site. Y250 functions as the Proton acceptor; specific for L-alanine in the catalytic mechanism. Position 298 (M298) interacts with substrate.

Belongs to the alanine racemase family. It depends on pyridoxal 5'-phosphate as a cofactor.

It carries out the reaction L-alanine = D-alanine. The protein operates within amino-acid biosynthesis; D-alanine biosynthesis; D-alanine from L-alanine: step 1/1. Functionally, catalyzes the interconversion of L-alanine and D-alanine. May also act on other amino acids. This is Alanine racemase (alr) from Neisseria meningitidis serogroup A / serotype 4A (strain DSM 15465 / Z2491).